Consider the following 394-residue polypeptide: Elongation factor Tu (394 aa).

The tr-type G domain occupies 10–204; it reads KPHVNVGTIG…ALDSYIPEPE (195 aa). The G1 stretch occupies residues 19 to 26; it reads GHVDHGKT. Position 19–26 (19–26) interacts with GTP; the sequence is GHVDHGKT. T26 is a binding site for Mg(2+). A G2 region spans residues 60–64; it reads GITIA. The tract at residues 81-84 is G3; it reads DCPG. GTP contacts are provided by residues 81–85 and 136–139; these read DCPGH and NKCD. A G4 region spans residues 136 to 139; the sequence is NKCD. A G5 region spans residues 174–176; it reads SAL.

This sequence belongs to the TRAFAC class translation factor GTPase superfamily. Classic translation factor GTPase family. EF-Tu/EF-1A subfamily. Monomer.

It is found in the cytoplasm. It catalyses the reaction GTP + H2O = GDP + phosphate + H(+). Functionally, GTP hydrolase that promotes the GTP-dependent binding of aminoacyl-tRNA to the A-site of ribosomes during protein biosynthesis. This Vibrio campbellii (strain ATCC BAA-1116) protein is Elongation factor Tu.